A 128-amino-acid polypeptide reads, in one-letter code: Large ribosomal subunit protein bL20c (128 aa).

It belongs to the bacterial ribosomal protein bL20 family.

The protein resides in the plastid. In terms of biological role, binds directly to 23S ribosomal RNA and is necessary for the in vitro assembly process of the 50S ribosomal subunit. It is not involved in the protein synthesizing functions of that subunit. This is Large ribosomal subunit protein bL20c (rpl20) from Lathraea clandestina (Purple toothwort).